Reading from the N-terminus, the 318-residue chain is Acetyl-coenzyme A carboxylase carboxyl transferase subunit alpha (318 aa).

Residues 38–292 (KLEKRLAKLE…NKTITKSLHA (255 aa)) form the CoA carboxyltransferase C-terminal domain.

Belongs to the AccA family. Acetyl-CoA carboxylase is a heterohexamer composed of biotin carboxyl carrier protein (AccB), biotin carboxylase (AccC) and two subunits each of ACCase subunit alpha (AccA) and ACCase subunit beta (AccD).

It localises to the cytoplasm. The enzyme catalyses N(6)-carboxybiotinyl-L-lysyl-[protein] + acetyl-CoA = N(6)-biotinyl-L-lysyl-[protein] + malonyl-CoA. The protein operates within lipid metabolism; malonyl-CoA biosynthesis; malonyl-CoA from acetyl-CoA: step 1/1. Functionally, component of the acetyl coenzyme A carboxylase (ACC) complex. First, biotin carboxylase catalyzes the carboxylation of biotin on its carrier protein (BCCP) and then the CO(2) group is transferred by the carboxyltransferase to acetyl-CoA to form malonyl-CoA. This chain is Acetyl-coenzyme A carboxylase carboxyl transferase subunit alpha, found in Listeria innocua serovar 6a (strain ATCC BAA-680 / CLIP 11262).